A 160-amino-acid chain; its full sequence is Lipoprotein signal peptidase (160 aa).

Helical transmembrane passes span 13–33, 72–92, and 104–124; these read IYIT…RLII, WFLS…ITKL, and SLII…GFVV. Active-site residues include D125 and D143. A helical membrane pass occupies residues 134–154; the sequence is WHFATFNIADCSIFIGIIILM.

It belongs to the peptidase A8 family.

Its subcellular location is the cell inner membrane. It carries out the reaction Release of signal peptides from bacterial membrane prolipoproteins. Hydrolyzes -Xaa-Yaa-Zaa-|-(S,diacylglyceryl)Cys-, in which Xaa is hydrophobic (preferably Leu), and Yaa (Ala or Ser) and Zaa (Gly or Ala) have small, neutral side chains.. It functions in the pathway protein modification; lipoprotein biosynthesis (signal peptide cleavage). In terms of biological role, this protein specifically catalyzes the removal of signal peptides from prolipoproteins. This chain is Lipoprotein signal peptidase, found in Buchnera aphidicola subsp. Acyrthosiphon pisum (strain APS) (Acyrthosiphon pisum symbiotic bacterium).